Here is a 137-residue protein sequence, read N- to C-terminus: uncharacterized protein (137 aa).

The Sm domain occupies 30-105 (SLLCVFTALR…IRFIQIPDKI (76 aa)).

This is an uncharacterized protein from Dictyostelium discoideum (Social amoeba).